The following is a 182-amino-acid chain: Troponin I, fast skeletal muscle (182 aa).

Gly-2 bears the N-acetylglycine mark. An involved in binding TNC region spans residues 2–48 (GDEEKRNRAITARRQHLKSVMLQIAATELEKEESRRESEKQNYLSEH). At Thr-12 the chain carries Phosphothreonine. A compositionally biased stretch (basic and acidic residues) spans 29–41 (ELEKEESRRESEK). Residues 29 to 53 (ELEKEESRRESEKQNYLSEHCPPLH) are disordered. Residues 97–117 (NQKLFDLRGKFKRPPLRRVRM) are involved in binding TNC and actin. Ser-118 carries the phosphoserine modification.

This sequence belongs to the troponin I family. Binds to actin and tropomyosin.

Troponin I is the inhibitory subunit of troponin, the thin filament regulatory complex which confers calcium-sensitivity to striated muscle actomyosin ATPase activity. The polypeptide is Troponin I, fast skeletal muscle (Tnni2) (Rattus norvegicus (Rat)).